Consider the following 579-residue polypeptide: Aspartate--tRNA(Asp/Asn) ligase (579 aa).

Position 171 (glutamate 171) interacts with L-aspartate. The interval 195 to 198 is aspartate; sequence QLFK. Arginine 217 lines the L-aspartate pocket. ATP-binding positions include 217 to 219 and glutamine 226; that span reads RDE. Histidine 444 contacts L-aspartate. Glutamate 475 contacts ATP. Arginine 482 contacts L-aspartate. 527–530 contributes to the ATP binding site; the sequence is GLDR.

It belongs to the class-II aminoacyl-tRNA synthetase family. Type 1 subfamily. Homodimer.

The protein resides in the cytoplasm. The catalysed reaction is tRNA(Asx) + L-aspartate + ATP = L-aspartyl-tRNA(Asx) + AMP + diphosphate. In terms of biological role, aspartyl-tRNA synthetase with relaxed tRNA specificity since it is able to aspartylate not only its cognate tRNA(Asp) but also tRNA(Asn). Reaction proceeds in two steps: L-aspartate is first activated by ATP to form Asp-AMP and then transferred to the acceptor end of tRNA(Asp/Asn). The protein is Aspartate--tRNA(Asp/Asn) ligase of Thermotoga maritima (strain ATCC 43589 / DSM 3109 / JCM 10099 / NBRC 100826 / MSB8).